Reading from the N-terminus, the 225-residue chain is NAD(P)H-quinone oxidoreductase subunit K, chloroplastic (225 aa).

The [4Fe-4S] cluster site is built by Cys-43, Cys-44, Cys-108, and Cys-139.

It belongs to the complex I 20 kDa subunit family. NDH is composed of at least 16 different subunits, 5 of which are encoded in the nucleus. [4Fe-4S] cluster serves as cofactor.

It localises to the plastid. It is found in the chloroplast thylakoid membrane. The catalysed reaction is a plastoquinone + NADH + (n+1) H(+)(in) = a plastoquinol + NAD(+) + n H(+)(out). It catalyses the reaction a plastoquinone + NADPH + (n+1) H(+)(in) = a plastoquinol + NADP(+) + n H(+)(out). In terms of biological role, NDH shuttles electrons from NAD(P)H:plastoquinone, via FMN and iron-sulfur (Fe-S) centers, to quinones in the photosynthetic chain and possibly in a chloroplast respiratory chain. The immediate electron acceptor for the enzyme in this species is believed to be plastoquinone. Couples the redox reaction to proton translocation, and thus conserves the redox energy in a proton gradient. The chain is NAD(P)H-quinone oxidoreductase subunit K, chloroplastic from Liriodendron tulipifera (Tuliptree).